Reading from the N-terminus, the 420-residue chain is UPF0229 protein LPC_3097 (420 aa).

The interval Ile-83–Glu-107 is disordered. Over residues Pro-91–Gly-100 the composition is skewed to gly residues.

It belongs to the UPF0229 family.

The chain is UPF0229 protein LPC_3097 from Legionella pneumophila (strain Corby).